The sequence spans 115 residues: Large ribosomal subunit protein bL20 (115 aa).

Belongs to the bacterial ribosomal protein bL20 family.

Functionally, binds directly to 23S ribosomal RNA and is necessary for the in vitro assembly process of the 50S ribosomal subunit. It is not involved in the protein synthesizing functions of that subunit. The sequence is that of Large ribosomal subunit protein bL20 from Prochlorococcus marinus (strain AS9601).